The sequence spans 692 residues: Transforming growth factor beta activator LRRC33 (692 aa).

An N-terminal signal peptide occupies residues 1-24 (MEFLPLWLCLGFHFLIVEWRSGRG). Residues 25–650 (TATAASQGGC…CKWGQVDTGL (626 aa)) lie on the Extracellular side of the membrane. Residues 29 to 56 (ASQGGCKVVDRVADCRSLNLASVPSGLP) form the LRRNT domain. 10 LRR repeats span residues 58–79 (HSRM…SLQA), 82–103 (RLED…AFHE), 106–127 (HLQN…SATA), 133–155 (RLRR…MLQN), 158–179 (SLEV…VFEG), 182–203 (RLVE…AFDG), 206–227 (ELRR…SLTQ), 228–239 (LRFLNVSYNILE), 251–272 (ELEI…PQCG), and 273–294 (KLHT…YNTS). N-linked (GlcNAc...) asparagine glycosylation occurs at Asn74. A glycan (N-linked (GlcNAc...) asparagine) is linked at Asn155. Asn232 carries an N-linked (GlcNAc...) asparagine glycan. 3 N-linked (GlcNAc...) asparagine glycosylation sites follow: Asn292, Asn309, and Asn312. 11 LRR repeats span residues 329 to 350 (ALRF…FLKK), 353 to 374 (SLSH…EHEP), 377 to 398 (ALTE…PGLT), 403 to 424 (NLRV…LFHS), 427 to 448 (SITT…VPLD), 463 to 484 (SLRS…PFQG), 486 to 507 (SLTH…SPLS), 512 to 533 (TLQV…MDFS), 537 to 558 (NLRE…KGSS), 559 to 580 (ALQT…VVSE), and 585 to 605 (GLQT…EGWG). The N-linked (GlcNAc...) asparagine glycan is linked to Asn408. The N-linked (GlcNAc...) asparagine glycan is linked to Asn500. The LRRCT domain occupies 606–643 (ALQHFKTIADLSMVTCNLSSKIIRVVELPEGIPQDCKW). N-linked (GlcNAc...) asparagine glycosylation occurs at Asn622. The helical transmembrane segment at 651–671 (FYLVLILPSCLTLLVASTVIF) threads the bilayer. Over 672 to 692 (LTFKKPLLQVIKSRCHWSSIY) the chain is Cytoplasmic.

The protein belongs to the LRRC32/LRRC33 family. In terms of assembly, interacts (via LRR repeats) with TLR2, TLR3, TLR4, TLR9 and probably other Toll-like receptors. Interacts with CYBB/NOX2; the interaction is direct. Interacts with TGFB1; associates via disulfide bonds with the Latency-associated peptide chain (LAP) regulatory chain of TGFB1, leading to regulate activation of TGF-beta-1.

It is found in the cell membrane. It localises to the endoplasmic reticulum membrane. Key regulator of transforming growth factor beta-1 (TGFB1) specifically required for microglia function in the nervous system. Required for activation of latent TGF-beta-1 in macrophages and microglia: associates specifically via disulfide bonds with the Latency-associated peptide (LAP), which is the regulatory chain of TGFB1, and regulates integrin-dependent activation of TGF-beta-1. TGF-beta-1 activation mediated by LRRC33/NRROS is highly localized: there is little spreading of TGF-beta-1 activated from one microglial cell to neighboring microglia, suggesting the existence of localized and selective activation of TGF-beta-1 by LRRC33/NRROS. Indirectly plays a role in Toll-like receptor (TLR) signaling: ability to inhibit TLR-mediated NF-kappa-B activation and cytokine production is probably a consequence of its role in TGF-beta-1 signaling. The polypeptide is Transforming growth factor beta activator LRRC33 (Rattus norvegicus (Rat)).